The following is a 404-amino-acid chain: MAFPTYRPVQCSKLTDHELLRIPHSPSLEPLDYCIEPISYLRRTVYDLHTTVANRSSSRALLHKQPPVMFKSPFGANANPFGGASDGATVGGNAMHQYNFSRRTSVSAESLKPSADTYDNWTPPVHDKTNEQLSRLKTAIAGNFLFSHLDDEQSAQILGALIEKPIPAKDIKVISQGDAGEYFYVVEKGSFDVYVNEKGTLQPGPEGMGEKVGTIQAGGSFGELALMYNAPRAATVISAEPGCTLWALDRLTFRRILMESTFLAAACTRTSSEKFPCCRHSHHMSAQKSPTRWKLRSTPLVRRLSRRETRVTRFTCSRWRGRCLPGEMARESVKHYSKGDFFGELALLNDAPRAASIVATTDVKVASLGKSAFQRLLGPVEGIMRRTKYDDIKTGVEEMDPLQV.

A dimerization and phosphorylation region spans residues 14–144 (LTDHELLRIP…RLKTAIAGNF (131 aa)). Position 105 is a phosphoserine (S105). 3',5'-cyclic AMP contacts are provided by residues 145–276 (LFSH…EKFP), E223, R232, 277–398 (CCRH…GVEE), E344, and R353.

Belongs to the cAMP-dependent kinase regulatory chain family. In terms of assembly, tetramer, composed of 2 regulatory (R) and 2 catalytic (C) subunits. In the presence of cAMP it dissociates into 2 active monomeric C subunits and an R dimer.

Its function is as follows. cAMP-dependent protein kinase PKA regulatory subunit. This Colletotrichum trifolii protein is cAMP-dependent protein kinase regulatory subunit (PKAR).